We begin with the raw amino-acid sequence, 210 residues long: MNLMNPTTGPVAITSNGLVPMVIEQTARGERSFDIYSRLLKERVIFLVGQVEDHMANLVVAQLLFLESENPDKDIHLYINSPGGSVTAGMSIYDTMQFIKPDVSTMCIGQAASMGALLLTAGAAGKRYCLPNSRVMIHQPLGGYQGQASDIEIHTREILSIKHKLNEIISFHTGKPIEQVALDTDRDNFMNPQTAKDYGLIDEILQKRTV.

The Nucleophile role is filled by serine 113. The active site involves histidine 138.

This sequence belongs to the peptidase S14 family. As to quaternary structure, fourteen ClpP subunits assemble into 2 heptameric rings which stack back to back to give a disk-like structure with a central cavity, resembling the structure of eukaryotic proteasomes.

The protein resides in the cytoplasm. It catalyses the reaction Hydrolysis of proteins to small peptides in the presence of ATP and magnesium. alpha-casein is the usual test substrate. In the absence of ATP, only oligopeptides shorter than five residues are hydrolyzed (such as succinyl-Leu-Tyr-|-NHMec, and Leu-Tyr-Leu-|-Tyr-Trp, in which cleavage of the -Tyr-|-Leu- and -Tyr-|-Trp bonds also occurs).. In terms of biological role, cleaves peptides in various proteins in a process that requires ATP hydrolysis. Has a chymotrypsin-like activity. Plays a major role in the degradation of misfolded proteins. The polypeptide is ATP-dependent Clp protease proteolytic subunit (Marinomonas sp. (strain MWYL1)).